The primary structure comprises 153 residues: Arginine repressor (153 aa).

It belongs to the ArgR family.

Its subcellular location is the cytoplasm. The protein operates within amino-acid biosynthesis; L-arginine biosynthesis [regulation]. In terms of biological role, regulates arginine biosynthesis genes. This chain is Arginine repressor, found in Clostridium tetani (strain Massachusetts / E88).